We begin with the raw amino-acid sequence, 580 residues long: Arginine--tRNA ligase (580 aa).

Positions Ala131–His141 match the 'HIGH' region motif.

Belongs to the class-I aminoacyl-tRNA synthetase family. In terms of assembly, monomer.

Its subcellular location is the cytoplasm. It catalyses the reaction tRNA(Arg) + L-arginine + ATP = L-arginyl-tRNA(Arg) + AMP + diphosphate. The polypeptide is Arginine--tRNA ligase (Cereibacter sphaeroides (strain ATCC 17023 / DSM 158 / JCM 6121 / CCUG 31486 / LMG 2827 / NBRC 12203 / NCIMB 8253 / ATH 2.4.1.) (Rhodobacter sphaeroides)).